The sequence spans 296 residues: 4-hydroxybenzoate octaprenyltransferase (296 aa).

A run of 8 helical transmembrane segments spans residues 29 to 49 (AGWLLLLWPTLSALWVAAGGF), 52 to 72 (WHLLSVFTLGTILMRSAGCCI), 103 to 123 (LVLGAVLALLAFALVLTTNAI), 151 to 171 (VLGVAFGMGIPMAFAAVLGEV), 176 to 196 (WLLMLGNLFWVLAYDTEYAMV), 220 to 240 (VILLCYLAFIVIWDVALMPYV), 243 to 263 (ALFTIAFALAFGQVAWHYTLI), and 275 to 295 (FRLNHWLGFTLFVGIAGSYAL).

Belongs to the UbiA prenyltransferase family. The cofactor is Mg(2+).

The protein localises to the cell inner membrane. It carries out the reaction all-trans-octaprenyl diphosphate + 4-hydroxybenzoate = 4-hydroxy-3-(all-trans-octaprenyl)benzoate + diphosphate. The protein operates within cofactor biosynthesis; ubiquinone biosynthesis. Functionally, catalyzes the prenylation of para-hydroxybenzoate (PHB) with an all-trans polyprenyl group. Mediates the second step in the final reaction sequence of ubiquinone-8 (UQ-8) biosynthesis, which is the condensation of the polyisoprenoid side chain with PHB, generating the first membrane-bound Q intermediate 3-octaprenyl-4-hydroxybenzoate. The protein is 4-hydroxybenzoate octaprenyltransferase of Albidiferax ferrireducens (strain ATCC BAA-621 / DSM 15236 / T118) (Rhodoferax ferrireducens).